The following is a 458-amino-acid chain: tRNA modification GTPase MnmE (458 aa).

Positions 26, 88, and 127 each coordinate (6S)-5-formyl-5,6,7,8-tetrahydrofolate. One can recognise a TrmE-type G domain in the interval G224 to F378. N234 is a K(+) binding site. GTP contacts are provided by residues N234–S239, T253–T259, and D278–G281. S238 lines the Mg(2+) pocket. The K(+) site is built by T253, I255, and T258. Mg(2+) is bound at residue T259. K458 lines the (6S)-5-formyl-5,6,7,8-tetrahydrofolate pocket.

It belongs to the TRAFAC class TrmE-Era-EngA-EngB-Septin-like GTPase superfamily. TrmE GTPase family. In terms of assembly, homodimer. Heterotetramer of two MnmE and two MnmG subunits. K(+) is required as a cofactor.

Its subcellular location is the cytoplasm. Its function is as follows. Exhibits a very high intrinsic GTPase hydrolysis rate. Involved in the addition of a carboxymethylaminomethyl (cmnm) group at the wobble position (U34) of certain tRNAs, forming tRNA-cmnm(5)s(2)U34. The sequence is that of tRNA modification GTPase MnmE from Streptococcus pyogenes serotype M12 (strain MGAS9429).